The primary structure comprises 647 residues: Nucleolar GTP-binding protein 1 (647 aa).

The region spanning 168 to 340 is the OBG-type G domain; sequence RTLLICGYPN…VRNKACEKLL (173 aa). GTP is bound by residues 174–181, 220–224, and 288–291; these read GYPNVGKS, DTPGI, and NKTD. Ser563 is modified (phosphoserine). The disordered stretch occupies residues 594–647; it reads ADGSMRSKADRMAKMERRERNRHAKQGESDRHNAVSLSKHLFSGKRGVGKTDFR. A compositionally biased stretch (basic and acidic residues) spans 598–626; the sequence is MRSKADRMAKMERRERNRHAKQGESDRHN.

Belongs to the TRAFAC class OBG-HflX-like GTPase superfamily. OBG GTPase family. NOG subfamily. As to quaternary structure, associated with nucleolar and cytoplasmic pre-60S particles. Directly interacts with RLP24.

The protein resides in the nucleus. The protein localises to the nucleolus. Involved in the biogenesis of the 60S ribosomal subunit. The polypeptide is Nucleolar GTP-binding protein 1 (NOG1) (Saccharomyces cerevisiae (strain ATCC 204508 / S288c) (Baker's yeast)).